Consider the following 139-residue polypeptide: Flagellar basal-body rod protein FlgC (139 aa).

The protein belongs to the flagella basal body rod proteins family. In terms of assembly, the basal body constitutes a major portion of the flagellar organelle and consists of four rings (L,P,S, and M) mounted on a central rod. The rod consists of about 26 subunits of FlgG in the distal portion, and FlgB, FlgC and FlgF are thought to build up the proximal portion of the rod with about 6 subunits each.

It localises to the bacterial flagellum basal body. The polypeptide is Flagellar basal-body rod protein FlgC (flgC) (Agrobacterium fabrum (strain C58 / ATCC 33970) (Agrobacterium tumefaciens (strain C58))).